A 432-amino-acid polypeptide reads, in one-letter code: Adenylosuccinate synthetase (432 aa).

GTP is bound by residues 12–18 (GDEGKGK) and 40–42 (GHT). Asp13 acts as the Proton acceptor in catalysis. Mg(2+) is bound by residues Asp13 and Gly40. IMP contacts are provided by residues 13 to 16 (DEGK), 38 to 41 (NAGH), Thr132, Arg146, Gln226, Thr241, and Arg305. The Proton donor role is filled by His41. 301-307 (TVTGRKR) provides a ligand contact to substrate. GTP contacts are provided by residues Arg307, 333 to 335 (KLD), and 415 to 417 (STS).

Belongs to the adenylosuccinate synthetase family. Homodimer. It depends on Mg(2+) as a cofactor.

It is found in the cytoplasm. It carries out the reaction IMP + L-aspartate + GTP = N(6)-(1,2-dicarboxyethyl)-AMP + GDP + phosphate + 2 H(+). It participates in purine metabolism; AMP biosynthesis via de novo pathway; AMP from IMP: step 1/2. Plays an important role in the de novo pathway of purine nucleotide biosynthesis. Catalyzes the first committed step in the biosynthesis of AMP from IMP. The chain is Adenylosuccinate synthetase from Allorhizobium ampelinum (strain ATCC BAA-846 / DSM 112012 / S4) (Agrobacterium vitis (strain S4)).